The primary structure comprises 230 residues: GDT1-like protein 4 (230 aa).

Helical transmembrane passes span 12 to 32 (LAMT…AILA), 39 to 59 (LVLA…ATLG), 71 to 91 (THHI…WDGF), 135 to 155 (AFLT…NFFG), 175 to 195 (FGVV…AVIG), and 207 to 227 (IVAL…YLTS).

Belongs to the GDT1 family.

It localises to the membrane. The sequence is that of GDT1-like protein 4 from Arabidopsis thaliana (Mouse-ear cress).